The following is a 200-amino-acid chain: A-type ATP synthase subunit E 3 (200 aa).

The protein belongs to the V-ATPase E subunit family. As to quaternary structure, has multiple subunits with at least A(3), B(3), C, D, E, F, H, I and proteolipid K(x).

It is found in the cell membrane. Functionally, component of the A-type ATP synthase that produces ATP from ADP in the presence of a proton gradient across the membrane. This Methanospirillum hungatei JF-1 (strain ATCC 27890 / DSM 864 / NBRC 100397 / JF-1) protein is A-type ATP synthase subunit E 3.